The chain runs to 434 residues: Enolase (434 aa).

A (2R)-2-phosphoglycerate-binding site is contributed by Gln163. Glu205 functions as the Proton donor in the catalytic mechanism. The Mg(2+) site is built by Asp242, Glu291, and Asp318. Residues Lys343, Arg372, Ser373, and Lys394 each coordinate (2R)-2-phosphoglycerate. Lys343 functions as the Proton acceptor in the catalytic mechanism.

Belongs to the enolase family. It depends on Mg(2+) as a cofactor.

It is found in the cytoplasm. Its subcellular location is the secreted. The protein resides in the cell surface. The catalysed reaction is (2R)-2-phosphoglycerate = phosphoenolpyruvate + H2O. The protein operates within carbohydrate degradation; glycolysis; pyruvate from D-glyceraldehyde 3-phosphate: step 4/5. Catalyzes the reversible conversion of 2-phosphoglycerate (2-PG) into phosphoenolpyruvate (PEP). It is essential for the degradation of carbohydrates via glycolysis. This chain is Enolase, found in Streptococcus thermophilus (strain ATCC BAA-491 / LMD-9).